A 315-amino-acid chain; its full sequence is Malate dehydrogenase (315 aa).

NAD(+) is bound by residues 11–16 (GAGHVG) and Asp-35. 2 residues coordinate substrate: Arg-84 and Arg-90. Residues Asn-97 and 120-122 (VTN) each bind NAD(+). Residues Asn-122 and Arg-153 each contribute to the substrate site. His-177 acts as the Proton acceptor in catalysis.

It belongs to the LDH/MDH superfamily. MDH type 3 family.

The enzyme catalyses (S)-malate + NAD(+) = oxaloacetate + NADH + H(+). Functionally, catalyzes the reversible oxidation of malate to oxaloacetate. In Thermosulfidibacter takaii (strain DSM 17441 / JCM 13301 / NBRC 103674 / ABI70S6), this protein is Malate dehydrogenase.